Consider the following 165-residue polypeptide: MVNPGSSSQPPPVTAGSLSWKRCAGCGGKIADRFLLYAMDSYWHSRCLKCSCCQAQLGDIGTSCYTKSGMILCRNDYIRLFGNSGACSACGQSIPASELVMRAQGNVYHLKCFTCSTCRNRLVPGDRFHYINGSLFCEHDRPTALINGHLNSLQSNPLLPDQKVC.

LIM zinc-binding domains follow at residues 23–83 (CAGC…LFGN) and 87–147 (CSAC…ALIN).

As to quaternary structure, interacts strongly with LDBS. Interacts with LDB2 and LDB1. Interaction with complexes consisting of at least LDB1 and LHX3 acts to disassemble the complex; may preferentially disassemble LDB1-LHX3 complexes rather than complexes consisting of LDB1, LHX3 and ISL1. Interacts (via the LIM zinc-binding domain 1) with RBBP8. Interacts with both RPPB8 and LDB1 through the same face and cannot bind to both proteins simultaneously. Interacts with BRCA1 (via the BRCT domains); the interaction represses BRCA1 transcriptional activity. Interacts with DEAF1; LMO4 blocks export from nucleus.

Functionally, transcription cofactor. Plays a role in establishing motor neuron identity, in concert with MNX1, acting, at least in part, to disrupt LDB1-LHX3 complexes thereby negatively modulating interneuron genes in motor neurons. This Bos taurus (Bovine) protein is LIM domain transcription factor LMO4 (LMO4).